Consider the following 352-residue polypeptide: Speedy protein E16 (352 aa).

A disordered region spans residues 1–90 (MDRTETRFRK…EPEKELAPEP (90 aa)). The span at 18–40 (ITTSRQPHPQNEQSPQRSTSGYS) shows a compositional bias: polar residues. Over residues 76 to 90 (DESEEEPEKELAPEP) the composition is skewed to acidic residues.

This sequence belongs to the Speedy/Ringo family.

The protein is Speedy protein E16 of Homo sapiens (Human).